We begin with the raw amino-acid sequence, 330 residues long: Ubiquinone biosynthesis protein COQ4, mitochondrial (330 aa).

A mitochondrion-targeting transit peptide spans 1–31; the sequence is MLQSTKVTKSVLTNVLRVEQRRGFLLSGAAV. Positions 212, 213, 216, and 228 each coordinate Zn(2+).

It belongs to the COQ4 family. As to quaternary structure, component of a multi-subunit COQ enzyme complex, composed of at least COQ3, COQ4, COQ5, COQ6, COQ7 and COQ9. It depends on Zn(2+) as a cofactor.

It localises to the mitochondrion inner membrane. The enzyme catalyses a 4-hydroxy-3-methoxy-5-(all-trans-polyprenyl)benzoate + H(+) = a 2-methoxy-6-(all-trans-polyprenyl)phenol + CO2. It participates in cofactor biosynthesis; ubiquinone biosynthesis. In terms of biological role, lyase that catalyzes the C1-decarboxylation of 4-hydroxy-3-methoxy-5-(all-trans-polyprenyl)benzoic acid into 2-methoxy-6-(all-trans-polyprenyl)phenol during ubiquinone biosynthesis. This is Ubiquinone biosynthesis protein COQ4, mitochondrial from Candida glabrata (strain ATCC 2001 / BCRC 20586 / JCM 3761 / NBRC 0622 / NRRL Y-65 / CBS 138) (Yeast).